Reading from the N-terminus, the 315-residue chain is Calcium homeostasis modulator protein 6 (315 aa).

Topologically, residues 1 to 21 are cytoplasmic; the sequence is MEKFKAVLDLQIKHRSALGYG. A helical transmembrane segment spans residues 22 to 37; sequence LVTLLTAGGEKIFSTV. Residues 38-46 are Extracellular-facing; sequence VFQCPCTAT. Cystine bridges form between C41–C127, C43–C156, and C140–C147. A helical transmembrane segment spans residues 47–68; that stretch reads LNLTYGLVFLLVPALALFLLGY. The Cytoplasmic segment spans residues 69-103; the sequence is ALSARTWRLLTGCCSRSASTRSSSGLRSTLVCAQV. A helical transmembrane segment spans residues 104–128; it reads SAVAALAPLTWVAVALLGGSFYQCA. Residues 129–169 are Extracellular-facing; the sequence is VSGSTRLASYLCKDRNHSCIAKLPQVPCNKQEAEMQEILSQ. Residues 170–192 form a helical membrane-spanning segment; sequence LKAQSQVLGWVLIAAVIFLLLVF. The Cytoplasmic segment spans residues 193–315; that stretch reads KCVSRCFSPV…DAAMANTHGV (123 aa).

The protein belongs to the CALHM family. As to quaternary structure, oligomerizes to form decameric and undecameric channels.

The protein resides in the cell membrane. It carries out the reaction ATP(in) = ATP(out). Its function is as follows. Pore-forming subunit of an ATP-permeable channel. In response to pathogen-derived and proinflammatory stimuli, relocates from intracellular compartments to NK-dendritic cell and NK-macrophage immune synapses where it mediates ATP efflux and NK cell activation involved in antimicrobial and antitumor responses. May assemble to form gap junction channel-like structures with gating and ion conductance likely regulated by membrane lipids and voltage rather than by extracellular calcium levels. The sequence is that of Calcium homeostasis modulator protein 6 from Rattus norvegicus (Rat).